Consider the following 655-residue polypeptide: Cyclomaltodextrin glucanotransferase (655 aa).

Positions 1-30 are cleaved as a signal peptide; sequence MKRNRFFNTSAAIAISIALNTFFCSMQTIA. Residues aspartate 55, asparagine 60, asparagine 61, glycine 79, and aspartate 81 each contribute to the Ca(2+) site. 123-124 lines the substrate pocket; it reads YW. Asparagine 164 serves as a coordination point for Ca(2+). Substrate contacts are provided by residues histidine 165 and 217 to 220; that span reads NLFN. Aspartate 223 provides a ligand contact to Ca(2+). Arginine 251 provides a ligand contact to substrate. Residue aspartate 253 is the Nucleophile of the active site. 256-257 serves as a coordination point for substrate; the sequence is KH. Histidine 257 contacts Ca(2+). Glutamate 287 functions as the Proton donor in the catalytic mechanism. Substrate is bound by residues histidine 362, aspartate 436, and arginine 440. The CBM20 domain occupies 554 to 655; it reads AENPTVQSIN…NDTQTTNGSF (102 aa). A disordered region spans residues 630-655; the sequence is TANVEWQSGANNQFNSNDTQTTNGSF.

The protein belongs to the glycosyl hydrolase 13 family. In terms of assembly, monomer. Requires Ca(2+) as cofactor.

It catalyses the reaction Cyclizes part of a (1-&gt;4)-alpha-D-glucan chain by formation of a (1-&gt;4)-alpha-D-glucosidic bond.. This chain is Cyclomaltodextrin glucanotransferase (cgt), found in Klebsiella oxytoca.